A 213-amino-acid chain; its full sequence is Orotidine 5'-phosphate decarboxylase (213 aa).

Residues Asp6, Lys25, 52–61, Ser109, 158–168, Gly181, and Arg182 contribute to the substrate site; these read DLKLADIDNT and PGVGAQGAMIG. Lys54 (proton donor) is an active-site residue.

It belongs to the OMP decarboxylase family. Type 1 subfamily. As to quaternary structure, homodimer.

The catalysed reaction is orotidine 5'-phosphate + H(+) = UMP + CO2. It participates in pyrimidine metabolism; UMP biosynthesis via de novo pathway; UMP from orotate: step 2/2. In terms of biological role, catalyzes the decarboxylation of orotidine 5'-monophosphate (OMP) to uridine 5'-monophosphate (UMP). The protein is Orotidine 5'-phosphate decarboxylase of Sulfurisphaera tokodaii (strain DSM 16993 / JCM 10545 / NBRC 100140 / 7) (Sulfolobus tokodaii).